The primary structure comprises 195 residues: dITP/XTP pyrophosphatase (195 aa).

8-13 (SNNQGK) provides a ligand contact to substrate. Mg(2+)-binding residues include glutamate 39 and aspartate 68. The Proton acceptor role is filled by aspartate 68. Substrate-binding positions include serine 69, 149–152 (FGYD), lysine 172, and 177–178 (HR).

Belongs to the HAM1 NTPase family. Homodimer. Mg(2+) is required as a cofactor.

It catalyses the reaction XTP + H2O = XMP + diphosphate + H(+). The catalysed reaction is dITP + H2O = dIMP + diphosphate + H(+). It carries out the reaction ITP + H2O = IMP + diphosphate + H(+). In terms of biological role, pyrophosphatase that catalyzes the hydrolysis of nucleoside triphosphates to their monophosphate derivatives, with a high preference for the non-canonical purine nucleotides XTP (xanthosine triphosphate), dITP (deoxyinosine triphosphate) and ITP. Seems to function as a house-cleaning enzyme that removes non-canonical purine nucleotides from the nucleotide pool, thus preventing their incorporation into DNA/RNA and avoiding chromosomal lesions. In Staphylococcus aureus (strain COL), this protein is dITP/XTP pyrophosphatase.